Here is a 259-residue protein sequence, read N- to C-terminus: Ribonuclease HII (259 aa).

Residues 70 to 258 (TLIVGIDEVG…VKSLVLGKKE (189 aa)) enclose the RNase H type-2 domain. The a divalent metal cation site is built by D76, E77, and D168.

The protein belongs to the RNase HII family. The cofactor is Mn(2+). Mg(2+) serves as cofactor.

The protein resides in the cytoplasm. It catalyses the reaction Endonucleolytic cleavage to 5'-phosphomonoester.. Functionally, endonuclease that specifically degrades the RNA of RNA-DNA hybrids. This Streptococcus pneumoniae (strain ATCC 700669 / Spain 23F-1) protein is Ribonuclease HII.